The chain runs to 1342 residues: Restriction of telomere capping protein 1 (1342 aa).

The segment at 1-39 (MSLSPHVENASIPKGSTPIPKNRNVSSIGKGEFLGSSSS) is disordered. WD repeat units lie at residues 207–248 (NKFS…SIDN), 256–296 (EHTR…SKSS), 305–342 (TASD…YKFA), 367–406 (AHTG…NAAE), 439–486 (NTDY…IPKH), and 489–527 (LSET…TVLE). Disordered regions lie at residues 559 to 593 (PELQ…IGGI), 600 to 619 (TGLT…GPTF), 630 to 651 (ASSF…ENRE), 736 to 766 (KNAT…DDDD), and 788 to 831 (LMNE…DRSR). Over residues 630 to 644 (ASSFNSSSASLTSLT) the composition is skewed to low complexity. The segment covering 753–766 (DDGDDDDDDDDDDD) has biased composition (acidic residues). The segment covering 815 to 824 (SSISSISASR) has biased composition (low complexity). The stretch at 844-884 (KIQTLVDLISIATHNASVYLSIDDLTNFKIWILIRDSLLWD) is one WD 7 repeat. 2 disordered regions span residues 942 to 963 (AFRA…KLKE) and 1014 to 1047 (DEHE…PILQ). Basic and acidic residues-rich tracts occupy residues 952–963 (DAEKKPVSKLKE) and 1016–1028 (HEHQ…HDSP). Phosphoserine occurs at positions 1037, 1081, 1088, 1090, 1124, and 1134. 2 WD repeats span residues 1130–1170 (SRPD…KQLY) and 1217–1256 (LFGI…LITN). The RING-type; degenerate zinc-finger motif lies at 1294–1336 (CVLCERPLKKLTMVILPCGHEGHFQCIQEWFLDENEQECPGGC).

This sequence belongs to the WD repeat RTC1 family.

The protein localises to the vacuole. May be involved in a process influencing telomere capping. This is Restriction of telomere capping protein 1 (RTC1) from Saccharomyces cerevisiae (strain RM11-1a) (Baker's yeast).